Consider the following 224-residue polypeptide: Myogenin (224 aa).

A phosphoserine; by CaMK2G mark is found at Ser-77 and Ser-79. The bHLH domain occupies 81 to 132 (DRRRAATLREKRRLKKVNEAFEALKRSTLLNPNQRLPKVEILRSAIQYIERL). Thr-87 carries the phosphothreonine; by CaMK2G modification.

In terms of assembly, homodimer and heterodimer with E12; heterodimerization enhances MYOG DNA-binding and transcriptional activities. Interacts with SMARCA4/BRG1/BAF190A. Interacts (via C-terminal region) with SSRP1 and SUPT16H; the interaction is indicative of an interaction with the FACT complex. Interacts with CSRP3. In terms of processing, phosphorylated by CAMK2G on threonine and serine amino acids in a muscle activity-dependent manner. Phosphorylation of Thr-87 impairs both DNA-binding and trans-activation functions in contracting muscles.

It is found in the nucleus. Functionally, acts as a transcriptional activator that promotes transcription of muscle-specific target genes and plays a role in muscle differentiation, cell cycle exit and muscle atrophy. Essential for the development of functional embryonic skeletal fiber muscle differentiation. However is dispensable for postnatal skeletal muscle growth; phosphorylation by CAMK2G inhibits its transcriptional activity in respons to muscle activity. Required for the recruitment of the FACT complex to muscle-specific promoter regions, thus promoting gene expression initiation. During terminal myoblast differentiation, plays a role as a strong activator of transcription at loci with an open chromatin structure previously initiated by MYOD1. Together with MYF5 and MYOD1, co-occupies muscle-specific gene promoter core regions during myogenesis. Also cooperates with myocyte-specific enhancer factor MEF2D and BRG1-dependent recruitment of SWI/SNF chromatin-remodeling enzymes to alter chromatin structure at myogenic late gene promoters. Facilitates cell cycle exit during terminal muscle differentiation through the up-regulation of miR-20a expression, which in turn represses genes involved in cell cycle progression. Binds to the E-box containing (E1) promoter region of the miR-20a gene. Also plays a role in preventing reversal of muscle cell differentiation. Contributes to the atrophy-related gene expression in adult denervated muscles. Induces fibroblasts to differentiate into myoblasts. This chain is Myogenin (MYOG), found in Bos taurus (Bovine).